We begin with the raw amino-acid sequence, 850 residues long: MSGKTRILFFLTCLSFLLVFPTRSNGQDLALSCGTSEASADQDKKKWEPDTKFLKTGNSIHATATYQDPSLLSTVPYMTARIFTAPATYEIPIKGDKRHLLRLYFYPSTYTGLNISNSYFTVEANDVTLLSNFSAAITCQALTQAYLVKEYSLAPTDKDVLSIKFTPSDKYRDAFAFINGIEVIQMPELFDTAALVGFTDQTMDAKTANLQSMFRLNVGGQDIPGSQDSGGLTRTWYNDAPYIFSAGLGVTLQASNNFRINYQNMPVSIAPADIYKTARSQGPNGDINLKSNLTWMFQIDKNFTYILRLHFCEFQLSKINQKVFNIYINNRTAQADTTPADIIGWTGEKGIPMYKDYAIYVDANNGGEEITLQMTPSTFGQPEYYDSSLNGLEIFKMDTMKNLAGPNPEPSPMQAEEEVKKEFKNEKRHAFIIGSAGGVLAVLIGALCFTAYKKKQGYQGGDSHTSSWLPIYGNSTTSGTKSTISGKSNNGSHLSNLAAGLCRRFSLPEIKHGTQNFDDSNVIGVGGFGKVYKGVIDGTTKVAVKKSNPNSEQGLNEFETEIELLSRLRHKHLVSLIGYCDEGGEMCLVYDYMAFGTLREHLYNTKKPQLTWKRRLEIAIGAARGLHYLHTGAKYTIIHRDVKTTNILVDENWVAKVSDFGLSKTGPNMNGGHVTTVVKGSFGYLDPEYFRRQQLTEKSDVYSFGVVLFEILCARPALNPSLPKEQVSLGDWAMNCKRKGNLEDIIDPNLKGKINAECLKKFADTAEKCLNDSGLERPTMGDVLWNLEFALQLQETADGTRHRTPNNGGSSEDLGRGGMAVNVAGRDDVSDLSSEDNTEIFSQIVNPKGR.

Residues 1-26 (MSGKTRILFFLTCLSFLLVFPTRSNG) form the signal peptide. Over 27–429 (QDLALSCGTS…KKEFKNEKRH (403 aa)) the chain is Extracellular. Asn114, Asn132, Asn292, Asn302, and Asn330 each carry an N-linked (GlcNAc...) asparagine glycan. The helical transmembrane segment at 430–450 (AFIIGSAGGVLAVLIGALCFT) threads the bilayer. Topologically, residues 451–850 (AYKKKQGYQG…FSQIVNPKGR (400 aa)) are cytoplasmic. In terms of domain architecture, Protein kinase spans 517–790 (FDDSNVIGVG…GDVLWNLEFA (274 aa)). Residues 523 to 531 (IGVGGFGKV) and Lys545 contribute to the ATP site. Asp641 acts as the Proton acceptor in catalysis. Positions 796–850 (TADGTRHRTPNNGGSSEDLGRGGMAVNVAGRDDVSDLSSEDNTEIFSQIVNPKGR) are disordered. Polar residues predominate over residues 839 to 850 (EIFSQIVNPKGR).

Belongs to the protein kinase superfamily. Ser/Thr protein kinase family. In terms of tissue distribution, expressed in pollen, but not in pistils or seedlings.

Its subcellular location is the cell membrane. The catalysed reaction is L-seryl-[protein] + ATP = O-phospho-L-seryl-[protein] + ADP + H(+). It catalyses the reaction L-threonyl-[protein] + ATP = O-phospho-L-threonyl-[protein] + ADP + H(+). Receptor-like protein kinase that controls pollen tube behavior by directing rupture at proper timing to release the sperm cell. The protein is Receptor-like protein kinase ANXUR1 (ANX1) of Arabidopsis thaliana (Mouse-ear cress).